A 528-amino-acid polypeptide reads, in one-letter code: Probable serine/threonine-protein kinase DDB_G0282417 (528 aa).

Low complexity predominate over residues 49-77 (NNNNNNNNNNNNNNNNNNNNNNNNNNKNN). Residues 49–84 (NNNNNNNNNNNNNNNNNNNNNNNNNNKNNNDGDDAA) are disordered. Residues 136-466 (QQNRVLIGEG…ESLINNHQYS (331 aa)) enclose the Protein kinase domain. ATP is bound by residues 142-150 (IGEGHYGKV) and K166. Residue D266 is the Proton acceptor of the active site.

Belongs to the protein kinase superfamily. Ser/Thr protein kinase family.

It catalyses the reaction L-seryl-[protein] + ATP = O-phospho-L-seryl-[protein] + ADP + H(+). It carries out the reaction L-threonyl-[protein] + ATP = O-phospho-L-threonyl-[protein] + ADP + H(+). The polypeptide is Probable serine/threonine-protein kinase DDB_G0282417 (Dictyostelium discoideum (Social amoeba)).